The following is a 650-amino-acid chain: 1-deoxy-D-xylulose-5-phosphate synthase (650 aa).

A compositionally biased stretch (basic and acidic residues) spans 1 to 13 (MSKIKNDKRETGH). Residues 1–23 (MSKIKNDKRETGHLKSPPETPLL) are disordered. Residues His92 and 133-135 (AHS) contribute to the thiamine diphosphate site. Asp164 is a Mg(2+) binding site. Thiamine diphosphate contacts are provided by residues 165 to 166 (GA), Asn193, Tyr302, and Glu384. Asn193 lines the Mg(2+) pocket.

The protein belongs to the transketolase family. DXPS subfamily. In terms of assembly, homodimer. It depends on Mg(2+) as a cofactor. Thiamine diphosphate is required as a cofactor.

It catalyses the reaction D-glyceraldehyde 3-phosphate + pyruvate + H(+) = 1-deoxy-D-xylulose 5-phosphate + CO2. The protein operates within metabolic intermediate biosynthesis; 1-deoxy-D-xylulose 5-phosphate biosynthesis; 1-deoxy-D-xylulose 5-phosphate from D-glyceraldehyde 3-phosphate and pyruvate: step 1/1. Functionally, catalyzes the acyloin condensation reaction between C atoms 2 and 3 of pyruvate and glyceraldehyde 3-phosphate to yield 1-deoxy-D-xylulose-5-phosphate (DXP). The polypeptide is 1-deoxy-D-xylulose-5-phosphate synthase (Chelativorans sp. (strain BNC1)).